The chain runs to 648 residues: DNA mismatch repair protein MutL (648 aa).

The tract at residues 385 to 430 (STVKGPAVNEPLTENTLNQQKVKTSASTPVVHTGNSVEPKPETSTA) is disordered. Residues 396–430 (LTENTLNQQKVKTSASTPVVHTGNSVEPKPETSTA) are compositionally biased toward polar residues.

The protein belongs to the DNA mismatch repair MutL/HexB family.

This protein is involved in the repair of mismatches in DNA. It is required for dam-dependent methyl-directed DNA mismatch repair. May act as a 'molecular matchmaker', a protein that promotes the formation of a stable complex between two or more DNA-binding proteins in an ATP-dependent manner without itself being part of a final effector complex. This chain is DNA mismatch repair protein MutL, found in Agathobacter rectalis (strain ATCC 33656 / DSM 3377 / JCM 17463 / KCTC 5835 / VPI 0990) (Eubacterium rectale).